A 310-amino-acid chain; its full sequence is GMP synthase [glutamine-hydrolyzing] subunit B (310 aa).

The GMPS ATP-PPase domain occupies 2-185 (FDPKKFIDEA…LGLPDSIVYR (184 aa)). 29 to 35 (SGGVDSS) provides a ligand contact to ATP.

In terms of assembly, heterodimer composed of a glutamine amidotransferase subunit (A) and a GMP-binding subunit (B).

It catalyses the reaction XMP + L-glutamine + ATP + H2O = GMP + L-glutamate + AMP + diphosphate + 2 H(+). It participates in purine metabolism; GMP biosynthesis; GMP from XMP (L-Gln route): step 1/1. Functionally, catalyzes the synthesis of GMP from XMP. In Methanocaldococcus jannaschii (strain ATCC 43067 / DSM 2661 / JAL-1 / JCM 10045 / NBRC 100440) (Methanococcus jannaschii), this protein is GMP synthase [glutamine-hydrolyzing] subunit B (guaAB).